The chain runs to 415 residues: Teichoic acid D-alanyltransferase (415 aa).

Topologically, residues 1-16 (MIDFLKQLPHLEPYGN) are extracellular. Residues 17–36 (PFYFIYLGIALLPIFIGLFF) form a helical membrane-spanning segment. The Cytoplasmic segment spans residues 37-40 (KKRF). A helical transmembrane segment spans residues 41–56 (AIYECLVSITFIVLAL). Over 57 to 60 (TGTH) the chain is Extracellular. A helical transmembrane segment spans residues 61–87 (ASQILALLFYIVWQIIWVYSYKRYRSQ). At 88 to 90 (RDN) the chain is on the cytoplasmic side. A helical transmembrane segment spans residues 91-115 (KWVFYLHSFLVVLPLILVKVEPTIN). The Extracellular segment spans residues 116–125 (GTQSLLNFLG). The helical transmembrane segment at 126 to 142 (ISYLTFRAVGMIIEMRD) threads the bilayer. Residues 143-149 (GVLKEFT) lie on the Cytoplasmic side of the membrane. An intramembrane segment occupies 150 to 179 (LGEFLRFMLFMPTFTSGPIDRFKRFNEDYQ). The Cytoplasmic segment spans residues 180–183 (SIPN). The helical transmembrane segment at 184-227 (RDELLNMLEQAVKYIMLGFLYKFVLAQIFGSMLLPPLKAQALSQ) threads the bilayer. Residues 228 to 232 (GGIFN) are Extracellular-facing. Residues 233-264 (LPTLGVMYVYGFDLFFDFAGYSMFALAVSNLM) form a helical membrane-spanning segment. Residues 265 to 274 (GIKSPINFDK) lie on the Cytoplasmic side of the membrane. An intramembrane segment occupies 275–311 (PFISRDMKEFWNRWHMSLSFWFRDFVFMRLVIVLMRN). Topologically, residues 312–316 (KVFKN) are cytoplasmic. The helical transmembrane segment at 317-336 (RNTTSNVAYIINMMVMGFWH) threads the bilayer. Residue H336 is part of the active site. At 337 to 339 (GIT) the chain is on the extracellular side. A helical transmembrane segment spans residues 340–373 (WYYIAYGIFHGIGLVINDAWLRKKKTINKDRKKA). At 374 to 381 (GLKPLPEN) the chain is on the cytoplasmic side. Residues 382–404 (KWTKALGIFITFNTVMLSFLIFS) traverse the membrane as a helical segment. The Extracellular portion of the chain corresponds to 405 to 415 (GFLNDLWFTKK).

It belongs to the membrane-bound acyltransferase family.

It is found in the cell membrane. It participates in cell wall biogenesis; lipoteichoic acid biosynthesis. O-acyltransferase that catalyzes D-alanylation of both teichoic acid and lipoteichoic acid (LTA). D-alanylation of LTA plays an important role in modulating the properties of the cell wall in Gram-positive bacteria, influencing the net charge of the cell wall. Catalyzes D-alanylation from DltC carrier protein. This Streptococcus thermophilus (strain ATCC BAA-250 / LMG 18311) protein is Teichoic acid D-alanyltransferase.